The chain runs to 543 residues: Bifunctional purine biosynthesis protein PurH (543 aa).

One can recognise an MGS-like domain in the interval 5–151; the sequence is NHARPIRRAL…KNHKDVTIVV (147 aa).

The protein belongs to the PurH family.

It catalyses the reaction (6R)-10-formyltetrahydrofolate + 5-amino-1-(5-phospho-beta-D-ribosyl)imidazole-4-carboxamide = 5-formamido-1-(5-phospho-D-ribosyl)imidazole-4-carboxamide + (6S)-5,6,7,8-tetrahydrofolate. The catalysed reaction is IMP + H2O = 5-formamido-1-(5-phospho-D-ribosyl)imidazole-4-carboxamide. Its pathway is purine metabolism; IMP biosynthesis via de novo pathway; 5-formamido-1-(5-phospho-D-ribosyl)imidazole-4-carboxamide from 5-amino-1-(5-phospho-D-ribosyl)imidazole-4-carboxamide (10-formyl THF route): step 1/1. It participates in purine metabolism; IMP biosynthesis via de novo pathway; IMP from 5-formamido-1-(5-phospho-D-ribosyl)imidazole-4-carboxamide: step 1/1. This chain is Bifunctional purine biosynthesis protein PurH, found in Shewanella oneidensis (strain ATCC 700550 / JCM 31522 / CIP 106686 / LMG 19005 / NCIMB 14063 / MR-1).